Consider the following 1243-residue polypeptide: Serine/threonine-protein kinase/endoribonuclease IRE1 (1243 aa).

A signal peptide spans 1 to 35 (MMRRPPSQGRWSASHQKLLLAFAFILIPWLQLADA). Over 36–585 (QQQPQQPQIR…VKALPQSAAN (550 aa)) the chain is Lumenal. Disordered regions lie at residues 70–132 (HAAP…KPNY) and 149–172 (QPVR…GLAS). The span at 73-85 (PDVHPEAKFDTVN) shows a compositional bias: basic and acidic residues. Residues 90-99 (QQSTASPQQH) are compositionally biased toward polar residues. Positions 163–172 (SSSAASGLAS) are enriched in low complexity. 3 N-linked (GlcNAc...) asparagine glycosylation sites follow: Asn-226, Asn-470, and Asn-554. A helical membrane pass occupies residues 586–606 (SVIDFVSNPILIIFLIGSLIY). At 607-1243 (NEKKLRRSYH…FREYYEPAGL (637 aa)) the chain is on the cytoplasmic side. Residues 638–765 (GDESGDDKDG…QSHENDPALT (128 aa)) form a disordered region. The span at 650-660 (PSSPSPRSQPQ) shows a compositional bias: low complexity. Residues 674-693 (ERNAGDQDKVKDNRSLHDVS) are compositionally biased toward basic and acidic residues. The span at 732-749 (KKKKAHRGRRGGVKHRKG) shows a compositional bias: basic residues. One can recognise a Protein kinase domain in the interval 809-1105 (VDTDVELGMG…SREVMAHPFF (297 aa)). Residues 815 to 823 (LGMGSNGTV) and Lys-837 each bind ATP. Residues Ser-819, Lys-837, Glu-881, and Cys-883 each coordinate ADP. The active-site Proton acceptor is the Asp-931. The Mg(2+) site is built by Asn-936 and Asp-953. Residues 1108-1240 (PKKRLAFLCD…TDRFREYYEP (133 aa)) form the KEN domain.

Belongs to the protein kinase superfamily. Ser/Thr protein kinase family. Mg(2+) is required as a cofactor. Autophosphorylated mainly on serine residues; phosphorylation enables nucleotide binding by the active site.

The protein localises to the endoplasmic reticulum membrane. It catalyses the reaction L-seryl-[protein] + ATP = O-phospho-L-seryl-[protein] + ADP + H(+). The enzyme catalyses L-threonyl-[protein] + ATP = O-phospho-L-threonyl-[protein] + ADP + H(+). Functionally, senses unfolded proteins in the lumen of the endoplasmic reticulum via its N-terminal domain which leads to enzyme auto-activation. The active endoribonuclease domain splices precursor mRNAs to produce their mature form which then induces transcription of UPR target genes. This chain is Serine/threonine-protein kinase/endoribonuclease IRE1, found in Hypocrea jecorina (strain QM6a) (Trichoderma reesei).